Here is a 90-residue protein sequence, read N- to C-terminus: QIEAGRRAMTRNVRRGGKTWVRIFPDKPVTLRAAETRMGSGKGNPEYWVAVVKPGRILYEMGGVAENIARKAISIAASKMPIRTQFIISG.

This sequence belongs to the universal ribosomal protein uL16 family. Part of the 50S ribosomal subunit.

The protein resides in the plastid. It localises to the chloroplast. This chain is Large ribosomal subunit protein uL16c (rpl16), found in Oenothera ammophila (Evening primerose).